A 110-amino-acid polypeptide reads, in one-letter code: Bowman-Birk type proteinase inhibitor (110 aa).

The N-terminal stretch at 1-19 (MVVLKVCLVLLFLVGGTTS) is a signal peptide. Positions 20–39 (ANLRLSKLGLLMKSDHQHSN) are excised as a propeptide. 7 disulfide bridges follow: cysteine 47–cysteine 101, cysteine 48–cysteine 63, cysteine 51–cysteine 97, cysteine 53–cysteine 61, cysteine 71–cysteine 78, cysteine 75–cysteine 90, and cysteine 80–cysteine 88.

It belongs to the Bowman-Birk serine protease inhibitor family.

Its function is as follows. Inhibitor of trypsin and of chymotrypsin. The chain is Bowman-Birk type proteinase inhibitor from Glycine max (Soybean).